The primary structure comprises 97 residues: Protein RADIALIS-like 6 (97 aa).

In terms of domain architecture, SANT spans 7 to 59 (SSISPWTFSQNKMFERALAVYDKDTPDRWHNVAKAVGGKTVEEVKRHYDILVE).

As to expression, expressed in the micropylar endosperm surrounding globular-stage embryos but no expression was detected elsewhere, including floral tissues.

The protein resides in the nucleus. Probable transcription factor. The protein is Protein RADIALIS-like 6 (RL6) of Arabidopsis thaliana (Mouse-ear cress).